Here is a 190-residue protein sequence, read N- to C-terminus: GTP cyclohydrolase 1 (190 aa).

The Zn(2+) site is built by cysteine 80, histidine 83, and cysteine 151.

This sequence belongs to the GTP cyclohydrolase I family. Toroid-shaped homodecamer, composed of two pentamers of five dimers.

It carries out the reaction GTP + H2O = 7,8-dihydroneopterin 3'-triphosphate + formate + H(+). Its pathway is cofactor biosynthesis; 7,8-dihydroneopterin triphosphate biosynthesis; 7,8-dihydroneopterin triphosphate from GTP: step 1/1. The protein is GTP cyclohydrolase 1 of Rickettsia akari (strain Hartford).